The primary structure comprises 71 residues: UPF0346 protein str0441 (71 aa).

The protein belongs to the UPF0346 family.

In Streptococcus thermophilus (strain CNRZ 1066), this protein is UPF0346 protein str0441.